A 638-amino-acid chain; its full sequence is Neuroendocrine convertase 2 (638 aa).

The first 25 residues, 1–25 (MKGGCVSQWKAAAGFLFCVMVFASA), serve as a signal peptide directing secretion. The propeptide occupies 26 to 109 (ERPVFTNHFL…QQEGFDRKKR (84 aa)). Residues 129–453 (QWYLINTGQA…YGVLDAGAMV (325 aa)) form the Peptidase S8 domain. Residues aspartate 167 and histidine 208 each act as charge relay system in the active site. 2 disulfides stabilise this stretch: cysteine 225-cysteine 376 and cysteine 317-cysteine 347. Residue asparagine 375 is glycosylated (N-linked (GlcNAc...) asparagine). Serine 384 (charge relay system) is an active-site residue. Residues 461-597 (TVPERFHCVG…TLMLHGTQSA (137 aa)) enclose the P/Homo B domain. Cysteine 468 and cysteine 494 form a disulfide bridge. N-linked (GlcNAc...) asparagine glycosylation is found at asparagine 514 and asparagine 524.

The protein belongs to the peptidase S8 family. Furin subfamily.

Its subcellular location is the cytoplasmic vesicle. The protein resides in the secretory vesicle. It localises to the secreted. It catalyses the reaction Release of protein hormones and neuropeptides from their precursors, generally by hydrolysis of -Lys-Arg-|- bonds.. Serine endopeptidase which is involved in the processing of hormone and other protein precursors at sites comprised of pairs of basic amino acid residues. Responsible for the release of glucagon from proglucagon in pancreatic A cells. This Pongo abelii (Sumatran orangutan) protein is Neuroendocrine convertase 2 (PCSK2).